A 458-amino-acid polypeptide reads, in one-letter code: Methionine aminopeptidase 2-2 (458 aa).

Over residues Met1–Gln14 the composition is skewed to basic and acidic residues. The disordered stretch occupies residues Met1–Ser93. A compositionally biased stretch (basic residues) spans Gln67 to Ala82. A substrate-binding site is contributed by His209. Asp230, Asp241, and His310 together coordinate a divalent metal cation. His318 is a substrate binding site. Glu343 and Glu439 together coordinate a divalent metal cation.

Belongs to the peptidase M24A family. Methionine aminopeptidase eukaryotic type 2 subfamily. The cofactor is Co(2+). Requires Zn(2+) as cofactor. It depends on Mn(2+) as a cofactor. Fe(2+) serves as cofactor.

It is found in the cytoplasm. The enzyme catalyses Release of N-terminal amino acids, preferentially methionine, from peptides and arylamides.. Functionally, cotranslationally removes the N-terminal methionine from nascent proteins. The N-terminal methionine is often cleaved when the second residue in the primary sequence is small and uncharged (Met-Ala-, Cys, Gly, Pro, Ser, Thr, or Val). The sequence is that of Methionine aminopeptidase 2-2 from Emericella nidulans (strain FGSC A4 / ATCC 38163 / CBS 112.46 / NRRL 194 / M139) (Aspergillus nidulans).